Consider the following 181-residue polypeptide: Probable RNA 2'-phosphotransferase (181 aa).

Belongs to the KptA/TPT1 family.

Its function is as follows. Removes the 2'-phosphate from RNA via an intermediate in which the phosphate is ADP-ribosylated by NAD followed by a presumed transesterification to release the RNA and generate ADP-ribose 1''-2''-cyclic phosphate (APPR&gt;P). May function as an ADP-ribosylase. This Nostoc punctiforme (strain ATCC 29133 / PCC 73102) protein is Probable RNA 2'-phosphotransferase.